Consider the following 299-residue polypeptide: Bifunctional phosphoglucose/phosphomannose isomerase (299 aa).

One can recognise an SIS domain in the interval 27-177 (DEVEITPSSR…IHKLMEDFQK (151 aa)). G44, S45, S84, S86, T89, and R132 together coordinate D-fructose 6-phosphate. E200 (proton acceptor) is an active-site residue. Positions 216 and 295 each coordinate D-fructose 6-phosphate. Residue H216 is the Proton donor of the active site. K295 acts as the Proton acceptor in catalysis.

This sequence belongs to the PGI/PMI family. In terms of assembly, homodimer.

The catalysed reaction is alpha-D-glucose 6-phosphate = beta-D-fructose 6-phosphate. It carries out the reaction D-mannose 6-phosphate = D-fructose 6-phosphate. Its activity is regulated as follows. Presence or absence of metal ions or EDTA does not significantly affect the phosphoglucose isomerase activity. Dual specificity isomerase that catalyzes the isomerization of both glucose-6-phosphate and mannose-6-phosphate to fructose-6-phosphate with nearly similar catalytic efficiency. Also catalyzes the epimerization of mannose 6-phosphate to glucose 6-phosphate but the rate of epimerization reaction is 20-fold lower than that of isomerization reaction. The chain is Bifunctional phosphoglucose/phosphomannose isomerase from Pyrobaculum calidifontis (strain DSM 21063 / JCM 11548 / VA1).